The sequence spans 262 residues: Nickel import ATP-binding protein NikD (262 aa).

The 244-residue stretch at 6–249 (LAIEGLTATT…PGHEVTRMLV (244 aa)) folds into the ABC transporter domain. 42 to 49 (GASGSGKS) provides a ligand contact to ATP.

The protein belongs to the ABC transporter superfamily. Nickel importer (TC 3.A.1.5.3) family. In terms of assembly, the complex is composed of two ATP-binding proteins (NikD and NikE), two transmembrane proteins (NikB and NikC) and a solute-binding protein (NikA).

It localises to the cell inner membrane. It carries out the reaction Ni(2+)(out) + ATP + H2O = Ni(2+)(in) + ADP + phosphate + H(+). Functionally, part of the ABC transporter complex NikABCDE involved in nickel import. Responsible for energy coupling to the transport system. The chain is Nickel import ATP-binding protein NikD from Brucella abortus biovar 1 (strain 9-941).